A 113-amino-acid chain; its full sequence is Large ribosomal subunit protein uL22 (113 aa).

The protein belongs to the universal ribosomal protein uL22 family. As to quaternary structure, part of the 50S ribosomal subunit.

This protein binds specifically to 23S rRNA; its binding is stimulated by other ribosomal proteins, e.g. L4, L17, and L20. It is important during the early stages of 50S assembly. It makes multiple contacts with different domains of the 23S rRNA in the assembled 50S subunit and ribosome. Its function is as follows. The globular domain of the protein is located near the polypeptide exit tunnel on the outside of the subunit, while an extended beta-hairpin is found that lines the wall of the exit tunnel in the center of the 70S ribosome. In Anoxybacillus flavithermus (strain DSM 21510 / WK1), this protein is Large ribosomal subunit protein uL22.